An 826-amino-acid chain; its full sequence is MVELSKKVTGKLDKTTPGIQIWRIENMEMVPVPTKSYGNFYEGDCYVLLSTRKTGSGFSYNIHYWLGKNSSQDEQGAAAIYTTQMDEYLGSVAVQHREVQGHESETFRAYFKQGLIYKQGGVASGMKHVETNTYNVQRLLHVKGKKNVVAAEVEMSWKSFNLGDVFLLDLGQLIIQWNGPESNRAERLRAMTLAKDIRDRERAGRAKVGVVEGENEAASPELMQALTHVLGEKKNIKAATPDEQVHQALNSALKLYHVSDASGNLVIQEVAIRPLTQDMLQHEDCYILDQAGLKIFVWKGKNANKEEKQQAMSRALGFIKAKNYLASTSVETENDGSESAVFRQLFQKWTVPNQTSGLGKTHTVGKVAKVEQVKFDATTMHVKPEVAAQQKMVDDGSGEAEVWRVENQELVPVEKRWLGHFYGGDCYLVLYTYYVGPKVNRIIYIWQGRHASTDELAASAYQAVFLDQKYNNEPVQVRVTMGKEPAHLMAIFKGKMVVYENGSSRAGGTEPASSTRLFHVHGTNEYNTKAFEVPVRAASLNSNDVFVLKTPSSCYLWYGKGCSGDEREMGKMVADIISKTEKPVVAEGQEPPEFWVALGGKTSYANSKRLQEENPSVPPRLFECSNKTGRFLATEIVDFTQDDLDENDVYLLDTWDQIFFWIGKGANESEKEAAAETAQEYLRSHPGSRDLDTPIIVVKQGFEPPTFTGWFMAWDPLCWSDRKSYDELKAELGDNASIGQLVSGLTSKNEVFTATTTLVPTKLETFPLDVLVNTAAEDLPRGVDPSRKENHLSDEDFKAVFGMTRSAFANLPLWKQQNLKKEKGLF.

Positions 1-734 are core; it reads MVELSKKVTG…YDELKAELGD (734 aa). One copy of the Gelsolin-like 1 repeat lies at 27-76; sequence MEMVPVPTKSYGNFYEGDCYVLLSTRKTGSGFSYNIHYWLGKNSSQDEQG. Residue 112–119 coordinates a 1,2-diacyl-sn-glycero-3-phospho-(1D-myo-inositol-4,5-bisphosphate); that stretch reads KQGLIYKQ. A crucial for binding an actin filament region spans residues 129–137; it reads VETNTYNVQ. A 1,2-diacyl-sn-glycero-3-phospho-(1D-myo-inositol-4,5-bisphosphate) is bound at residue 138-146; it reads RLLHVKGKK. 5 Gelsolin-like repeats span residues 148–188, 265–309, 408–457, 528–568, and 631–672; these read VVAA…AERL, LVIQ…EEKQ, QELV…DELA, TKAF…DERE, and FLAT…SEKE. A headpiece region spans residues 735-826; the sequence is NASIGQLVSG…QNLKKEKGLF (92 aa). The HP domain maps to 760–826; the sequence is PTKLETFPLD…QNLKKEKGLF (67 aa). The absolutely required for activity stretch occupies residues 820-823; sequence KKEK.

The protein belongs to the villin/gelsolin family. In terms of assembly, monomer. Homodimer. Associates with F-actin; the association with F-actin is inhibited by tropomyosin. Post-translationally, phosphorylated on tyrosine residues. The unphosphorylated form increases the initial rate of actin-nucleating activity, whereas the tyrosine-phosphorylated form inhibits actin-nucleating activity, enhances actin-bundling activity and enhances actin-severing activity by reducing high Ca(2+) requirements. The tyrosine-phosphorylated form does not regulate actin-capping activity. Tyrosine phosphorylation is essential for cell migration: tyrosine phosphorylation sites in the N-terminus half regulate actin reorganization and cell morphology, whereas tyrosine phosphorylation sites in the C-terminus half regulate cell migration. Tyrosine phosphorylation is induced by epidermal growth factor (EGF) and stimulates cell migration. Specifically expressed in epithelial cells. Component of brush border microvilli.

The protein localises to the cytoplasm. It is found in the cytoskeleton. It localises to the cell projection. Its subcellular location is the microvillus. The protein resides in the lamellipodium. The protein localises to the ruffle. It is found in the filopodium tip. It localises to the filopodium. In terms of biological role, epithelial cell-specific Ca(2+)-regulated actin-modifying protein that modulates the reorganization of microvillar actin filaments. Plays a role in the actin nucleation, actin filament bundle assembly, actin filament capping and severing. Binds phosphatidylinositol 4,5-bisphosphate (PIP2) and lysophosphatidic acid (LPA); binds LPA with higher affinity than PIP2. Binding to LPA increases its phosphorylation by SRC and inhibits all actin-modifying activities. Binding to PIP2 inhibits actin-capping and -severing activities but enhances actin-bundling activity. Regulates the intestinal epithelial cell morphology, cell invasion, cell migration and apoptosis. Protects against apoptosis induced by dextran sodium sulfate (DSS) in the gastrointestinal epithelium. Appears to regulate cell death by maintaining mitochondrial integrity. Enhances hepatocyte growth factor (HGF)-induced epithelial cell motility, chemotaxis and wound repair. Its actin-bundling activity is inhibited by tropomyosin. This is Villin-1 (VIL1) from Gallus gallus (Chicken).